A 160-amino-acid polypeptide reads, in one-letter code: Transcriptional regulator MraZ (160 aa).

2 SpoVT-AbrB domains span residues 5–51 and 80–123; these read TFEK…GKAL and MAKL…EREA.

It belongs to the MraZ family. As to quaternary structure, forms oligomers.

Its subcellular location is the cytoplasm. The protein localises to the nucleoid. The protein is Transcriptional regulator MraZ of Phenylobacterium zucineum (strain HLK1).